The following is a 634-amino-acid chain: tRNA uridine 5-carboxymethylaminomethyl modification enzyme MnmG (634 aa).

14–19 (GGGHAG) lines the FAD pocket. Residue 279-293 (GPRYCPSIEDKVVRF) participates in NAD(+) binding.

The protein belongs to the MnmG family. As to quaternary structure, homodimer. Heterotetramer of two MnmE and two MnmG subunits. Requires FAD as cofactor.

The protein resides in the cytoplasm. Functionally, NAD-binding protein involved in the addition of a carboxymethylaminomethyl (cmnm) group at the wobble position (U34) of certain tRNAs, forming tRNA-cmnm(5)s(2)U34. The polypeptide is tRNA uridine 5-carboxymethylaminomethyl modification enzyme MnmG (Xanthomonas euvesicatoria pv. vesicatoria (strain 85-10) (Xanthomonas campestris pv. vesicatoria)).